A 90-amino-acid chain; its full sequence is MNVKCERFIVKGHVQGVGFRYHTSHQGLKLGLTGYAKNLNNGDVEVMACGPKEKIDQFCEWLQEGPRTATVESVTRESVSYKPFRGFKIL.

One can recognise an Acylphosphatase-like domain in the interval 5 to 90 (CERFIVKGHV…YKPFRGFKIL (86 aa)). Residues Arg-20 and Asn-38 contribute to the active site.

It belongs to the acylphosphatase family.

It catalyses the reaction an acyl phosphate + H2O = a carboxylate + phosphate + H(+). The polypeptide is Acylphosphatase (acyP) (Vibrio parahaemolyticus serotype O3:K6 (strain RIMD 2210633)).